A 198-amino-acid polypeptide reads, in one-letter code: Nucleoside triphosphate pyrophosphatase (198 aa).

The Proton acceptor role is filled by Asp72.

It belongs to the Maf family. It depends on a divalent metal cation as a cofactor.

The protein localises to the cytoplasm. The catalysed reaction is a ribonucleoside 5'-triphosphate + H2O = a ribonucleoside 5'-phosphate + diphosphate + H(+). It catalyses the reaction a 2'-deoxyribonucleoside 5'-triphosphate + H2O = a 2'-deoxyribonucleoside 5'-phosphate + diphosphate + H(+). In terms of biological role, nucleoside triphosphate pyrophosphatase. May have a dual role in cell division arrest and in preventing the incorporation of modified nucleotides into cellular nucleic acids. The chain is Nucleoside triphosphate pyrophosphatase from Corynebacterium diphtheriae (strain ATCC 700971 / NCTC 13129 / Biotype gravis).